We begin with the raw amino-acid sequence, 200 residues long: Elongation factor Ts (200 aa).

The tract at residues 80–83 is involved in Mg(2+) ion dislocation from EF-Tu; sequence TDFV.

It belongs to the EF-Ts family.

It localises to the cytoplasm. Functionally, associates with the EF-Tu.GDP complex and induces the exchange of GDP to GTP. It remains bound to the aminoacyl-tRNA.EF-Tu.GTP complex up to the GTP hydrolysis stage on the ribosome. The chain is Elongation factor Ts from Caldanaerobacter subterraneus subsp. tengcongensis (strain DSM 15242 / JCM 11007 / NBRC 100824 / MB4) (Thermoanaerobacter tengcongensis).